The sequence spans 351 residues: Leukotriene B4 receptor 1 (351 aa).

Residues Met-1–Leu-21 lie on the Extracellular side of the membrane. An N-linked (GlcNAc...) asparagine glycan is attached at Asn-4. A helical transmembrane segment spans residues Leu-22–Ser-44. Topologically, residues Ile-45–Ala-56 are cytoplasmic. A helical membrane pass occupies residues Leu-57–Leu-77. The Extracellular portion of the chain corresponds to His-78–Arg-93. The helical transmembrane segment at Leu-94–Leu-115 threads the bilayer. The Cytoplasmic portion of the chain corresponds to Asp-116–Leu-140. The chain crosses the membrane as a helical span at residues Ala-141–Thr-161. Residues Pro-162–Lys-179 lie on the Extracellular side of the membrane. A glycan (N-linked (GlcNAc...) asparagine) is linked at Asn-164. A helical membrane pass occupies residues Val-180–Ala-200. The Cytoplasmic portion of the chain corresponds to Ser-201–Arg-222. The chain crosses the membrane as a helical span at residues Leu-223–Leu-243. Residues Val-244 to Tyr-268 lie on the Extracellular side of the membrane. The helical transmembrane segment at Val-269–Gly-289 threads the bilayer. Residues Gly-290–Lys-351 lie on the Cytoplasmic side of the membrane. 2 stretches are compositionally biased toward polar residues: residues Glu-311–Ala-327 and Ser-339–Lys-351. The disordered stretch occupies residues Glu-311–Lys-351.

This sequence belongs to the G-protein coupled receptor 1 family. Phosphorylated by GRK6 upon leukotriene B4 binding; which promotes desensitization. In terms of tissue distribution, exclusively expressed in polymorphonuclear leukocytes.

It is found in the cell membrane. In terms of biological role, receptor for leukotriene B4, a potent chemoattractant involved in inflammation and immune response. The chain is Leukotriene B4 receptor 1 (Ltb4r) from Rattus norvegicus (Rat).